The primary structure comprises 68 residues: Neuronal regeneration-related protein (68 aa).

In Gallus gallus (Chicken), this protein is Neuronal regeneration-related protein (NREP).